We begin with the raw amino-acid sequence, 164 residues long: ATP synthase subunit b 1 (164 aa).

A helical transmembrane segment spans residues 8-28 (PETWVAVAFVILMGVFAYFGV).

It belongs to the ATPase B chain family. F-type ATPases have 2 components, F(1) - the catalytic core - and F(0) - the membrane proton channel. F(1) has five subunits: alpha(3), beta(3), gamma(1), delta(1), epsilon(1). F(0) has three main subunits: a(1), b(2) and c(10-14). The alpha and beta chains form an alternating ring which encloses part of the gamma chain. F(1) is attached to F(0) by a central stalk formed by the gamma and epsilon chains, while a peripheral stalk is formed by the delta and b chains.

The protein localises to the cell inner membrane. F(1)F(0) ATP synthase produces ATP from ADP in the presence of a proton or sodium gradient. F-type ATPases consist of two structural domains, F(1) containing the extramembraneous catalytic core and F(0) containing the membrane proton channel, linked together by a central stalk and a peripheral stalk. During catalysis, ATP synthesis in the catalytic domain of F(1) is coupled via a rotary mechanism of the central stalk subunits to proton translocation. Its function is as follows. Component of the F(0) channel, it forms part of the peripheral stalk, linking F(1) to F(0). In Rhodopseudomonas palustris (strain BisB18), this protein is ATP synthase subunit b 1.